Here is a 169-residue protein sequence, read N- to C-terminus: MRPRKYIVVVLLSIAYTMCLAVGYPSDGTDDSTKSLKSGNRIRSHTPDIGTEERTLTWLKSMLRPSSSSAKVTKEIPEVVKSASDFKVRQTLSAITRKLGLHSQRLKRFASWLRKTGERLTRKKVYYAGYIAIVDSSSSQLKRLSVTYGSAFLFVIGFIVLLAFAMTAV.

The first 21 residues, 1 to 21 (MRPRKYIVVVLLSIAYTMCLA), serve as a signal peptide directing secretion. The dEER motif lies at 51-54 (TEER). Residues 149–169 (GSAFLFVIGFIVLLAFAMTAV) form a helical membrane-spanning segment.

The protein belongs to the RxLR effector family. As to quaternary structure, interacts with host transcription factor NAC069.

It is found in the secreted. Its subcellular location is the host membrane. Secreted effector that inhibits stress-induced relocalization of the endoplasmic reticulum tail-anchored transcription factors to the nucleus, thus affecting stress responses. The chain is Secreted RxLR effector protein BLN03 from Bremia lactucae (Lettuce downy mildew).